The chain runs to 374 residues: Alcohol dehydrogenase class-3 (374 aa).

Ala2 bears the N-acetylalanine mark. Zn(2+) is bound by residues Cys45, His67, Cys97, Cys100, Cys103, Cys111, and Cys174. Residue Lys233 is modified to N6-succinyllysine. Residue Ser247 is modified to Phosphoserine. Lys315 bears the N6-succinyllysine mark. Phosphoserine occurs at positions 324 and 351.

This sequence belongs to the zinc-containing alcohol dehydrogenase family. Class-III subfamily. As to quaternary structure, homodimer. Requires Zn(2+) as cofactor.

It localises to the cytoplasm. It carries out the reaction a primary alcohol + NAD(+) = an aldehyde + NADH + H(+). The catalysed reaction is a secondary alcohol + NAD(+) = a ketone + NADH + H(+). It catalyses the reaction S-(hydroxymethyl)glutathione + NADP(+) = S-formylglutathione + NADPH + H(+). The enzyme catalyses S-(hydroxymethyl)glutathione + NAD(+) = S-formylglutathione + NADH + H(+). It carries out the reaction 20-oxo-(5Z,8Z,11Z,14Z)-eicosatetraenoate + NAD(+) + H2O = (5Z,8Z,11Z,14Z)-eicosatetraenedioate + NADH + 2 H(+). The catalysed reaction is 20-hydroxy-(5Z,8Z,11Z,14Z)-eicosatetraenoate + NAD(+) = 20-oxo-(5Z,8Z,11Z,14Z)-eicosatetraenoate + NADH + H(+). It catalyses the reaction S-nitrosoglutathione + NADH + H(+) = S-(hydroxysulfenamide)glutathione + NAD(+). Its function is as follows. Catalyzes the oxidation of long-chain primary alcohols and the oxidation of S-(hydroxymethyl) glutathione. Also oxidizes long chain omega-hydroxy fatty acids, such as 20-HETE, producing both the intermediate aldehyde, 20-oxoarachidonate and the end product, a dicarboxylic acid, (5Z,8Z,11Z,14Z)-eicosatetraenedioate. Class-III ADH is remarkably ineffective in oxidizing ethanol. Required for clearance of cellular formaldehyde, a cytotoxic and carcinogenic metabolite that induces DNA damage. Also acts as a S-nitroso-glutathione reductase by catalyzing the NADH-dependent reduction of S-nitrosoglutathione, thereby regulating protein S-nitrosylation. The sequence is that of Alcohol dehydrogenase class-3 from Oryctolagus cuniculus (Rabbit).